We begin with the raw amino-acid sequence, 295 residues long: Small ribosomal subunit protein uS2 (295 aa).

Residue serine 2 is modified to N-acetylserine. A Phosphoserine modification is found at serine 43. Lysine 52 bears the N6-acetyllysine mark. Positions 54–113 (TWEKLLLAARAIVAIENPADVSVISSRNTGQRAVLKFAAATGATPIAGRFTPGTFTNQIQ) are interaction with PPP1R16B. N6-acetyllysine; alternate is present on lysine 89. Residue lysine 89 forms a Glycyl lysine isopeptide (Lys-Gly) (interchain with G-Cter in SUMO2); alternate linkage. A Phosphothreonine modification is found at threonine 97. Laminin-binding stretches follow at residues 161-180 (IPCNNKGAHSVGLMWWMLAR) and 205-229 (RDPEEIEKEEQAAAEKAVTKEEFQG). 5 [DE]-W-[ST] repeats span residues 230–232 (EWT), 247–249 (DWS), 266–268 (DWS), 275–277 (DWS), and 293–295 (EWS). Residues 242–295 (QPEVADWSEGVQVPSVPIQQFPTEDWSAQPATEDWSAAPTAQATEWVGATTEWS) are laminin-binding. Residues 266–295 (DWSAQPATEDWSAAPTAQATEWVGATTEWS) are disordered.

Belongs to the universal ribosomal protein uS2 family. In terms of assembly, monomer (37LRP) and homodimer (67LR). Component of the small ribosomal subunit. Mature ribosomes consist of a small (40S) and a large (60S) subunit. The 40S subunit contains about 33 different proteins and 1 molecule of RNA (18S). The 60S subunit contains about 49 different proteins and 3 molecules of RNA (28S, 5.8S and 5S). Interacts with RPS21. Interacts with several laminins including at least LAMB1. Interacts with MDK. The mature dimeric form interacts with PPP1R16B (via its fourth ankyrin repeat). Interacts with PPP1CA only in the presence of PPP1R16B. Acylated. Acylation may be a prerequisite for conversion of the monomeric 37 kDa laminin receptor precursor (37LRP) to the mature dimeric 67 kDa laminin receptor (67LR), and may provide a mechanism for membrane association. Post-translationally, cleaved by stromelysin-3 (ST3) at the cell surface. Cleavage by stromelysin-3 may be a mechanism to alter cell-extracellular matrix interactions. Expressed in most neurons and in a subset of glial cells. The overall distribution of LR correlates with that reported for laminin-1 but also with brain regions classically associated with prion-related neurodegeneration.

It localises to the cell membrane. The protein localises to the cytoplasm. The protein resides in the nucleus. In terms of biological role, required for the assembly and/or stability of the 40S ribosomal subunit. Required for the processing of the 20S rRNA-precursor to mature 18S rRNA in a late step of the maturation of 40S ribosomal subunits. Also functions as a cell surface receptor for laminin. Plays a role in cell adhesion to the basement membrane and in the consequent activation of signaling transduction pathways. May play a role in cell fate determination and tissue morphogenesis. Also acts as a receptor for several other ligands, including the pathogenic prion protein, viruses, and bacteria. Acts as a PPP1R16B-dependent substrate of PPP1CA. This chain is Small ribosomal subunit protein uS2 (Rpsa), found in Rattus norvegicus (Rat).